The chain runs to 419 residues: Synaptotagmin-1 (419 aa).

Residues Met1 to Pro57 lie on the Vesicular side of the membrane. The N-linked (GlcNAc...) asparagine glycan is linked to Asn25. The chain crosses the membrane as a helical span at residues Pro58–Cys80. 5 S-palmitoyl cysteine lipidation sites follow: Cys75, Cys76, Cys78, Cys80, and Cys83. The Cytoplasmic portion of the chain corresponds to Lys81–Lys419. The interval Lys108–Lys139 is disordered. The segment covering Gln117 to Lys131 has biased composition (acidic residues). Thr126 bears the Phosphothreonine mark. Residues Glu133–Asn379 form a phospholipid binding region. The 120-residue stretch at Lys139–Arg258 folds into the C2 1 domain. Leu169, Asp170, and Asp176 together coordinate Ca(2+). A Phosphotyrosine modification is found at Tyr227. 6 residues coordinate Ca(2+): Asp228, Phe229, Asp230, Ser233, Lys234, and Asp236. Ser262 is subject to Phosphoserine. In terms of domain architecture, C2 2 spans Lys270–His403. Ca(2+)-binding residues include Asp301 and Asp307. A phosphoserine mark is found at Ser340 and Ser342. Ca(2+) is bound by residues Asp361, Asp363, and Asp369.

This sequence belongs to the synaptotagmin family. As to quaternary structure, homotetramer. Heterodimer; heterodimerizes with SYT2 in presence of calcium. Interacts with SCAMP5. Interacts with STON2. Forms a complex with SV2B, syntaxin 1 and SNAP25. Interacts with SV2A, SV2B and SV2C. Interacts with RIMS1. Interacts with PRRT2. Interacts with DNAJC5 in a phosphorylation-dependent manner. Interacts (via N-terminus) with RAB3A. Interacts with SYT12. Interacts with calmodulin. Interacts with DNM1 (via C-terminal proline-rich domain (PRD)); this interaction facilitates vesicle fission during clathrin-mediated endocytosis (CME). It depends on Ca(2+) as a cofactor. Glycosylated.

Its subcellular location is the cytoplasmic vesicle. The protein localises to the secretory vesicle membrane. It localises to the secretory vesicle. The protein resides in the synaptic vesicle membrane. It is found in the chromaffin granule membrane. Its subcellular location is the cytoplasm. Functionally, calcium sensor that participates in triggering neurotransmitter release at the synapse. May have a regulatory role in the membrane interactions during trafficking of synaptic vesicles at the active zone of the synapse. It binds acidic phospholipids with a specificity that requires the presence of both an acidic head group and a diacyl backbone. A Ca(2+)-dependent interaction between synaptotagmin and putative receptors for activated protein kinase C has also been reported. It can bind to at least three additional proteins in a Ca(2+)-independent manner; these are neurexins, syntaxin and AP2. Plays a role in dendrite formation by melanocytes. In Macaca fascicularis (Crab-eating macaque), this protein is Synaptotagmin-1.